The sequence spans 519 residues: ATP synthase subunit alpha (519 aa).

175 to 182 (GDRQTGKT) serves as a coordination point for ATP.

The protein belongs to the ATPase alpha/beta chains family. In terms of assembly, F-type ATPases have 2 components, CF(1) - the catalytic core - and CF(0) - the membrane proton channel. CF(1) has five subunits: alpha(3), beta(3), gamma(1), delta(1), epsilon(1). CF(0) has three main subunits: a(1), b(2) and c(9-12). The alpha and beta chains form an alternating ring which encloses part of the gamma chain. CF(1) is attached to CF(0) by a central stalk formed by the gamma and epsilon chains, while a peripheral stalk is formed by the delta and b chains.

It localises to the cell inner membrane. It catalyses the reaction ATP + H2O + 4 H(+)(in) = ADP + phosphate + 5 H(+)(out). Its function is as follows. Produces ATP from ADP in the presence of a proton gradient across the membrane. The alpha chain is a regulatory subunit. The chain is ATP synthase subunit alpha from Acinetobacter baylyi (strain ATCC 33305 / BD413 / ADP1).